The chain runs to 359 residues: 3-isopropylmalate dehydrogenase (359 aa).

Position 76–89 (76–89 (GPKWDDPSAKTRPE)) interacts with NAD(+). Substrate contacts are provided by Arg-96, Arg-106, Arg-134, and Asp-223. Mg(2+) is bound by residues Asp-223, Asp-247, and Asp-251. 281-293 (GSAPDIAGKSVAN) contributes to the NAD(+) binding site.

Belongs to the isocitrate and isopropylmalate dehydrogenases family. LeuB type 1 subfamily. In terms of assembly, homodimer. Mg(2+) serves as cofactor. Mn(2+) is required as a cofactor.

It localises to the cytoplasm. The enzyme catalyses (2R,3S)-3-isopropylmalate + NAD(+) = 4-methyl-2-oxopentanoate + CO2 + NADH. The protein operates within amino-acid biosynthesis; L-leucine biosynthesis; L-leucine from 3-methyl-2-oxobutanoate: step 3/4. Functionally, catalyzes the oxidation of 3-carboxy-2-hydroxy-4-methylpentanoate (3-isopropylmalate) to 3-carboxy-4-methyl-2-oxopentanoate. The product decarboxylates to 4-methyl-2 oxopentanoate. The sequence is that of 3-isopropylmalate dehydrogenase from Rhodopirellula baltica (strain DSM 10527 / NCIMB 13988 / SH1).